A 368-amino-acid polypeptide reads, in one-letter code: DNA replication and repair protein RecF (368 aa).

30-37 (GKNGTGKT) serves as a coordination point for ATP.

The protein belongs to the RecF family.

It is found in the cytoplasm. In terms of biological role, the RecF protein is involved in DNA metabolism; it is required for DNA replication and normal SOS inducibility. RecF binds preferentially to single-stranded, linear DNA. It also seems to bind ATP. The chain is DNA replication and repair protein RecF from Chloroherpeton thalassium (strain ATCC 35110 / GB-78).